A 328-amino-acid polypeptide reads, in one-letter code: MIEKIWSGESPLWRLLLPLSWLYGLVSGAIRLCYKLKLKRAWRAPVPVVVVGNLTAGGNGKTPVVVWLVEQLQQRGIRVGVVSRGYGGKAESYPLLLSADTTTAQAGDEPVLIYQRTDAPVAVSPVRSDAVKAILAQHPDVQIIVTDDGLQHYRLARDVEIVVIDGVRRFGNGWWLPAGPMRERAGRLKSVDAVIVNGGVPRSGEIPMHLLPGQAVNLRTGTRCDVAQLEHVVAMAGIGHPPRFFATLKMCGVQPEKCVPLADHQSLNHADVSALVSAGQTLVMTEKDAVKCRAFAEENWWYLPVDAQLSGDEPAKLLTQLTSLASGN.

55–62 (TAGGNGKT) provides a ligand contact to ATP.

The protein belongs to the LpxK family.

It carries out the reaction a lipid A disaccharide + ATP = a lipid IVA + ADP + H(+). It participates in glycolipid biosynthesis; lipid IV(A) biosynthesis; lipid IV(A) from (3R)-3-hydroxytetradecanoyl-[acyl-carrier-protein] and UDP-N-acetyl-alpha-D-glucosamine: step 6/6. Its function is as follows. Transfers the gamma-phosphate of ATP to the 4'-position of a tetraacyldisaccharide 1-phosphate intermediate (termed DS-1-P) to form tetraacyldisaccharide 1,4'-bis-phosphate (lipid IVA). The sequence is that of Tetraacyldisaccharide 4'-kinase from Escherichia coli (strain 55989 / EAEC).